The primary structure comprises 146 residues: Large ribosomal subunit protein uL15 (146 aa).

The disordered stretch occupies residues 1-51; that stretch reads MQLNTLKPAEGSKKNRRRVGRGIGSGLGKTAGRGHKGQKSRSGGFHKVGFE. The segment covering 21–31 has biased composition (gly residues); that stretch reads RGIGSGLGKTA.

The protein belongs to the universal ribosomal protein uL15 family. Part of the 50S ribosomal subunit.

Functionally, binds to the 23S rRNA. The protein is Large ribosomal subunit protein uL15 of Polynucleobacter asymbioticus (strain DSM 18221 / CIP 109841 / QLW-P1DMWA-1) (Polynucleobacter necessarius subsp. asymbioticus).